A 210-amino-acid chain; its full sequence is Probable septum site-determining protein MinC (210 aa).

It belongs to the MinC family. As to quaternary structure, interacts with MinD and FtsZ.

Cell division inhibitor that blocks the formation of polar Z ring septums. Rapidly oscillates between the poles of the cell to destabilize FtsZ filaments that have formed before they mature into polar Z rings. Prevents FtsZ polymerization. In Clostridium novyi (strain NT), this protein is Probable septum site-determining protein MinC.